We begin with the raw amino-acid sequence, 305 residues long: Methionyl-tRNA formyltransferase (305 aa).

(6S)-5,6,7,8-tetrahydrofolate is bound at residue 111-114 (SLLP).

It belongs to the Fmt family.

The catalysed reaction is L-methionyl-tRNA(fMet) + (6R)-10-formyltetrahydrofolate = N-formyl-L-methionyl-tRNA(fMet) + (6S)-5,6,7,8-tetrahydrofolate + H(+). In terms of biological role, attaches a formyl group to the free amino group of methionyl-tRNA(fMet). The formyl group appears to play a dual role in the initiator identity of N-formylmethionyl-tRNA by promoting its recognition by IF2 and preventing the misappropriation of this tRNA by the elongation apparatus. In Campylobacter jejuni subsp. jejuni serotype O:23/36 (strain 81-176), this protein is Methionyl-tRNA formyltransferase.